Reading from the N-terminus, the 213-residue chain is Large ribosomal subunit protein uL1 (213 aa).

Belongs to the universal ribosomal protein uL1 family. In terms of assembly, part of the 50S ribosomal subunit.

In terms of biological role, binds directly to 23S rRNA. Probably involved in E site tRNA release. Its function is as follows. Protein L1 is also a translational repressor protein, it controls the translation of its operon by binding to its mRNA. The chain is Large ribosomal subunit protein uL1 from Methanococcus maripaludis (strain C6 / ATCC BAA-1332).